A 1254-amino-acid chain; its full sequence is Structural polyprotein (1254 aa).

The segment at 1-33 (MFPFQPMYPMQPMPYRNPFAAPRRPWFPRTDPF) is necessary for nucleocapsid assembly and virus assembly. Residues 33–68 (FLAMQVQELTRSMANLTFKQRRGAPPEGPPAKKSKR) form a host transcription inhibition region. Residues 41–48 (LTRSMANL) carry the Supraphysiological nuclear export signal motif. N-linked (GlcNAc...) asparagine; by host glycosylation is present at N47. The disordered stretch occupies residues 48–118 (LTFKQRRGAP…KKPGKRQRMV (71 aa)). The Nuclear localization signal signature appears at 64 to 68 (KKSKR). Basic residues predominate over residues 76-91 (GGQRKKKKNEGKKKAK). The tract at residues 90 to 126 (AKTGPPNLKTQNGNKKKTNKKPGKRQRMVMKLESDKT) is binding to the viral RNA. A phosphothreonine mark is found at T92 and T107. Positions 103–117 (NKKKTNKKPGKRQRM) are enriched in basic residues. The segment at 111–125 (PGKRQRMVMKLESDK) is ribosome-binding. Residue S123 is modified to Phosphoserine. Residues 125-274 (KTFPIMLEGK…KYTPENCEQW (150 aa)) form the Peptidase S3 domain. Position 126 is a phosphothreonine (T126). Catalysis depends on H151, which acts as the Charge relay system. The interaction with spike glycoprotein E2 stretch occupies residues 167–172 (KKASKY). Residues D173 and S225 each act as charge relay system in the active site. Positions 259-263 (EKGVT) are interaction with spike glycoprotein E2. A functions as an uncleaved signal peptide for the precursor of protein E3/E2 region spans residues 275 to 286 (SLVTTMCLLANV). The Extracellular segment spans residues 275-702 (SLVTTMCLLA…YHRYPMSTIT (428 aa)). 7 cysteine pairs are disulfide-bonded: C281–C290, C352–C456, C355–C360, C423–C437, C484–C599, C533–C559, and C535–C553. N285 carries an N-linked (GlcNAc...) asparagine; by host glycan. N-linked (GlcNAc...) asparagine; by host glycans are attached at residues N545 and N651. Residues 703-723 (GLSICAAIVAVSIAASTWLLC) form a helical membrane-spanning segment. The interval 724-728 (RSRAS) is interaction with the capsid protein. Topologically, residues 724-756 (RSRASCLTPYRLTPNAKMPLCLAVLCCARSARA) are cytoplasmic. S-palmitoyl cysteine; by host attachment occurs at residues C729, C749, and C750. An intrachain disulfide couples C729 to C750. The segment at 735 to 754 (LTPNAKMPLCLAVLCCARSA) is transient transmembrane before p62-6K protein processing. The Extracellular segment spans residues 757 to 768 (ETTWESLDHLWN). The helical transmembrane segment at 769–789 (NNQQMFWTQLLIPLAALIVVT) threads the bilayer. Residue R790 is a topological domain, cytoplasmic. The helical transmembrane segment at 791–811 (LLKCMCCVVPFLVVAGAAGAG) threads the bilayer. At 812 to 1224 (AYEHATTMPN…SKTAWTWLTS (413 aa)) the chain is on the extracellular side. 4 disulfides stabilise this stretch: C861-C926, C874-C906, C875-C908, and C880-C890. An E1 fusion peptide loop region spans residues 896–913 (VYPFMWGGAYCFCDTENT). N946 and N1082 each carry an N-linked (GlcNAc...) asparagine; by host glycan. 4 disulfide bridges follow: C1071–C1083, C1113–C1188, C1118–C1192, and C1140–C1182. A helical membrane pass occupies residues 1225–1245 (LLGGSAVIIIIGLVLATLVAM). Topologically, residues 1246 to 1254 (YVLTNQKHN) are cytoplasmic.

In terms of assembly, homodimer. Homomultimer. Interacts with host karyopherin KPNA4; this interaction allows the nuclear import of the viral capsid protein. Interacts with spike glycoprotein E2. Interacts with host IRAK1; the interaction leads to inhibition of IRAK1-dependent signaling. Part of a tetrameric complex composed of host CRM1, host importin alpha/beta dimer and the viral capsid; this complex blocks the receptor-mediated transport through the nuclear pore. Interacts with host phosphatase PPP1CA; this interaction dephosphorylates the capsid protein, which increases its ability to bind to the viral genome. As to quaternary structure, the precursor of protein E3/E2 and E1 form a heterodimer shortly after synthesis. Interacts with spike glycoprotein E2. The precursor of protein E3/E2 and E1 form a heterodimer shortly after synthesis. Processing of the precursor of protein E3/E2 into E2 and E3 results in a heterodimer of the spike glycoproteins E2 and E1. Spike at virion surface are constituted of three E2-E1 heterodimers. After target cell attachment and endocytosis, E1 change conformation to form homotrimers. Interacts with 6K protein. Interacts with host LDLRAD3; this interaction mediates viral entry to the host cell. In terms of assembly, interacts with spike glycoprotein E1. Processing of the precursor of protein E3/E2 into E2 and E3 results in a heterodimer of the spike glycoproteins E2 and E1. Spike at virion surface are constituted of a trimer of E2-E1 heterodimers. Interacts with 6K protein. Interacts with host LDLRAD3; this interaction mediates viral entry to the host cell. As to quaternary structure, oligomer. Interacts with spike glycoprotein E1. Interacts with spike glycoprotein E2. In terms of processing, structural polyprotein: Specific enzymatic cleavages in vivo yield mature proteins. Capsid protein is auto-cleaved during polyprotein translation, unmasking a signal peptide at the N-terminus of the precursor of E3/E2. The remaining polyprotein is then targeted to the host endoplasmic reticulum, where host signal peptidase cleaves it into pE2, 6K and E1 proteins. pE2 is further processed to mature E3 and E2 by host furin in trans-Golgi vesicle. Post-translationally, phosphorylated on serine and threonine residues. Palmitoylated via thioester bonds. These palmitoylations may induce disruption of the C-terminus transmembrane. This would result in the reorientation of E2 C-terminus from lumenal to cytoplasmic side. In terms of processing, N-glycosylated. Post-translationally, palmitoylated via thioester bonds.

Its subcellular location is the virion. The protein resides in the host cytoplasm. The protein localises to the host cell membrane. It is found in the host nucleus. It localises to the virion membrane. Its subcellular location is the host Golgi apparatus. The protein resides in the host trans-Golgi network. The protein localises to the host endoplasmic reticulum. The catalysed reaction is Autocatalytic release of the core protein from the N-terminus of the togavirus structural polyprotein by hydrolysis of a -Trp-|-Ser- bond.. In terms of biological role, forms an icosahedral capsid with a T=4 symmetry composed of 240 copies of the capsid protein surrounded by a lipid membrane through which penetrate 80 spikes composed of trimers of E1-E2 heterodimers. The capsid protein binds to the viral RNA genome at a site adjacent to a ribosome binding site for viral genome translation following genome release. Possesses a protease activity that results in its autocatalytic cleavage from the nascent structural protein. Following its self-cleavage, the capsid protein transiently associates with ribosomes, and within several minutes the protein binds to viral RNA and rapidly assembles into icosahedric core particles. The resulting nucleocapsid eventually associates with the cytoplasmic domain of the spike glycoprotein E2 at the cell membrane, leading to budding and formation of mature virions. In case of infection, new virions attach to target cells and after clathrin-mediated endocytosis their membrane fuses with the host endosomal membrane. This leads to the release of the nucleocapsid into the cytoplasm, followed by an uncoating event necessary for the genomic RNA to become accessible. The uncoating might be triggered by the interaction of capsid proteins with ribosomes. Binding of ribosomes would release the genomic RNA since the same region is genomic RNA-binding and ribosome-binding. Specifically inhibits interleukin-1 receptor-associated kinase 1/IRAK1-dependent signaling during viral entry, representing a means by which the alphaviruses may evade innate immune detection and activation prior to viral gene expression. Inhibits host transcription. Forms a tetrameric complex with XPO1/CRM1 and the nuclear import receptor importin. This complex blocks the central channel of host nuclear pores thereby inhibiting the receptor-mediated nuclear transport and thus the host mRNA and rRNA transcription. The inhibition of transcription is linked to a cytopathic effect on the host cell. Functionally, provides the signal sequence for the translocation of the precursor of protein E3/E2 to the host endoplasmic reticulum. Furin-cleaved E3 remains associated with spike glycoprotein E1 and mediates pH protection of the latter during the transport via the secretory pathway. After virion release from the host cell, the assembly protein E3 is gradually released in the extracellular space. Plays a role in viral attachment to target host cell, by binding to the cell receptor LDLRAD3. Synthesized as a p62 precursor which is processed by furin at the cell membrane just before virion budding, giving rise to E2-E1 heterodimer. The p62-E1 heterodimer is stable, whereas E2-E1 is unstable and dissociate at low pH. p62 is processed at the last step, presumably to avoid E1 fusion activation before its final export to cell surface. E2 C-terminus contains a transitory transmembrane that would be disrupted by palmitoylation, resulting in reorientation of the C-terminal tail from lumenal to cytoplasmic side. This step is critical since E2 C-terminus is involved in budding by interacting with capsid proteins. This release of E2 C-terminus in cytoplasm occurs lately in protein export, and precludes premature assembly of particles at the endoplasmic reticulum membrane. Its function is as follows. Acts as a viroporin that participates in virus glycoprotein processing and transport to the plasma membrane, cell permeabilization and budding of viral particles. Disrupts the calcium homeostasis of the cell, probably at the endoplasmic reticulum level. This leads to cytoplasmic calcium elevation. Because of its lipophilic properties, the 6K protein is postulated to influence the selection of lipids that interact with the transmembrane domains of the glycoproteins, which, in turn, affects the deformability of the bilayer required for the extreme curvature that occurs as budding proceeds. Present in low amount in virions, about 3% compared to viral glycoproteins. In terms of biological role, class II viral fusion protein. Fusion activity is inactive as long as E1 is bound to E2 in mature virion. After virus attachment to cell receptor LDLRAD3 and endocytosis, acidification of the endosome induce dissociation of E1/E2 heterodimer and concomitant trimerization of the E1 subunits. This E1 trimer is fusion active, and promotes release of viral nucleocapsid in cytoplasm after endosome and viral membrane fusion. Efficient fusion requires the presence of cholesterol and sphingolipid in the target membrane. The polypeptide is Structural polyprotein (Venezuelan equine encephalitis virus (strain Everglades Fe3-7c) (VEEV)).